The primary structure comprises 504 residues: Glucose-6-phosphate isomerase (504 aa).

The active-site Proton donor is the glutamate 333. Residues histidine 364 and lysine 473 contribute to the active site.

Belongs to the GPI family.

It localises to the cytoplasm. The enzyme catalyses alpha-D-glucose 6-phosphate = beta-D-fructose 6-phosphate. It participates in carbohydrate biosynthesis; gluconeogenesis. The protein operates within carbohydrate degradation; glycolysis; D-glyceraldehyde 3-phosphate and glycerone phosphate from D-glucose: step 2/4. Functionally, catalyzes the reversible isomerization of glucose-6-phosphate to fructose-6-phosphate. The chain is Glucose-6-phosphate isomerase from Stenotrophomonas maltophilia (strain K279a).